The sequence spans 512 residues: ATP synthase subunit alpha (512 aa).

169 to 176 (GDRQTGKT) is an ATP binding site.

The protein belongs to the ATPase alpha/beta chains family. F-type ATPases have 2 components, CF(1) - the catalytic core - and CF(0) - the membrane proton channel. CF(1) has five subunits: alpha(3), beta(3), gamma(1), delta(1), epsilon(1). CF(0) has three main subunits: a(1), b(2) and c(9-12). The alpha and beta chains form an alternating ring which encloses part of the gamma chain. CF(1) is attached to CF(0) by a central stalk formed by the gamma and epsilon chains, while a peripheral stalk is formed by the delta and b chains.

The protein resides in the cell inner membrane. It catalyses the reaction ATP + H2O + 4 H(+)(in) = ADP + phosphate + 5 H(+)(out). In terms of biological role, produces ATP from ADP in the presence of a proton gradient across the membrane. The alpha chain is a regulatory subunit. This chain is ATP synthase subunit alpha, found in Rickettsia canadensis (strain McKiel).